We begin with the raw amino-acid sequence, 377 residues long: Carbamoyl phosphate synthase small chain (377 aa).

Positions 1 to 186 (MNTPALLVLA…LGKGFVTPDK (186 aa)) are CPSase. L-glutamine is bound by residues Ser-47, Gly-238, and Gly-240. In terms of domain architecture, Glutamine amidotransferase type-1 spans 190-377 (HVVAYDFGVK…IGNMKAAKQA (188 aa)). The Nucleophile role is filled by Cys-266. L-glutamine is bound by residues Leu-267, Gln-270, Asn-308, Gly-310, and Phe-311. Residues His-350 and Glu-352 contribute to the active site.

This sequence belongs to the CarA family. In terms of assembly, composed of two chains; the small (or glutamine) chain promotes the hydrolysis of glutamine to ammonia, which is used by the large (or ammonia) chain to synthesize carbamoyl phosphate. Tetramer of heterodimers (alpha,beta)4.

It carries out the reaction hydrogencarbonate + L-glutamine + 2 ATP + H2O = carbamoyl phosphate + L-glutamate + 2 ADP + phosphate + 2 H(+). The enzyme catalyses L-glutamine + H2O = L-glutamate + NH4(+). Its pathway is amino-acid biosynthesis; L-arginine biosynthesis; carbamoyl phosphate from bicarbonate: step 1/1. It participates in pyrimidine metabolism; UMP biosynthesis via de novo pathway; (S)-dihydroorotate from bicarbonate: step 1/3. In terms of biological role, small subunit of the glutamine-dependent carbamoyl phosphate synthetase (CPSase). CPSase catalyzes the formation of carbamoyl phosphate from the ammonia moiety of glutamine, carbonate, and phosphate donated by ATP, constituting the first step of 2 biosynthetic pathways, one leading to arginine and/or urea and the other to pyrimidine nucleotides. The small subunit (glutamine amidotransferase) binds and cleaves glutamine to supply the large subunit with the substrate ammonia. This is Carbamoyl phosphate synthase small chain from Neisseria gonorrhoeae.